We begin with the raw amino-acid sequence, 1205 residues long: Centrosome and spindle pole associated protein 1 (1205 aa).

2 coiled-coil regions span residues 12–34 (QKAKLAKDKAELESDPPYMEMKG) and 87–108 (KLKEELRQDYRRYLTQGITQAK). A disordered region spans residues 16-37 (LAKDKAELESDPPYMEMKGKAS). A compositionally biased stretch (basic and acidic residues) spans 158-173 (STEKVRQVEKNIEPKS). Disordered regions lie at residues 158 to 187 (STEKVRQVEKNIEPKSQRNKNPISQGKSDL), 222 to 277 (SRRP…PGVS), and 380 to 467 (QQKK…GSTL). The span at 176-187 (NKNPISQGKSDL) shows a compositional bias: polar residues. Basic and acidic residues-rich tracts occupy residues 222 to 233 (SRRPLKQTKEEV) and 257 to 275 (ANGERVLDRQHCRADRDPG). Positions 357-391 (EDRELTKRRKEKYRQELLEQIAEQQKKKRREKDLA) form a coiled coil. 2 stretches are compositionally biased toward basic and acidic residues: residues 401–410 (DPEKSPDRLK) and 417–428 (RHFEEMPPERPR). Serine 405 carries the post-translational modification Phosphoserine. Positions 433 to 447 (TPPPPFSAPSSPSVP) are enriched in pro residues. The stretch at 574 to 618 (STQSLQSYQEALQEQIREREARRKKERLEKEEYEAKLEAEMRIYN) forms a coiled coil. Residues 677–704 (AENLEDSANKNSGPLQTQSSPFARGNTF) are disordered. The segment covering 685–697 (NKNSGPLQTQSSP) has biased composition (polar residues). A coiled-coil region spans residues 724-813 (RFQIEEKRQR…EKHNLQLQHY (90 aa)). Phosphoserine occurs at positions 850 and 869. The tract at residues 862-881 (SSMSRAQSPPVPARKNQLRA) is disordered. A coiled-coil region spans residues 874-911 (ARKNQLRAEEEKKNVIMELSEMRKQLRSEERRLQGRLL). Residue serine 915 is modified to Phosphoserine. Residues 993–1014 (QQQALLREQQKRLNRIKMRRDA) are a coiled coil. Disordered stretches follow at residues 1086–1105 (GLDFDSSRLHTPQDGLSLKS), 1124–1169 (RLTE…RPGT), and 1182–1205 (NEEQHKGPGKPGTFTWQGLSAAHA). The segment covering 1124 to 1134 (RLTEQQKKPTN) has biased composition (basic and acidic residues). The segment covering 1135–1145 (TDDEGSLVDPD) has biased composition (acidic residues). The span at 1146-1156 (DIMRHLSDDGR) shows a compositional bias: basic and acidic residues.

In terms of assembly, interacts with PLEKHG6. Interacts with ARMC9, TOGARAM1, CCDC66, CEP104 and CEP290. Phosphorylated. Phosphorylation increases in colcemide-treated cells.

The protein resides in the cytoplasm. Its subcellular location is the cytoskeleton. It localises to the microtubule organizing center. It is found in the centrosome. The protein localises to the spindle. The protein resides in the spindle pole. Its subcellular location is the cell projection. It localises to the cilium. Functionally, may play a role in cell-cycle-dependent microtubule organization. The sequence is that of Centrosome and spindle pole associated protein 1 (Cspp1) from Mus musculus (Mouse).